Reading from the N-terminus, the 441-residue chain is Malate dehydrogenase [NADP], chloroplastic (441 aa).

The transit peptide at 1 to 51 (MAVAELSPSYKTQLKTCQQLSSSLSTRLSDHRKFSLRLLPRPVSVRGGIRC) directs the protein to the chloroplast. An intrachain disulfide couples cysteine 75 to cysteine 80. Residue 104–110 (GAAGMIS) coordinates NADP(+). Substrate is bound by residues arginine 185 and arginine 191. Asparagine 198 is a binding site for NADP(+). Glutamine 205 serves as a coordination point for NAD(+). Residue 222–224 (VGN) participates in NADP(+) binding. Substrate is bound by residues asparagine 224 and arginine 255. Residue histidine 280 is the Proton acceptor of the active site. A disulfide bridge connects residues cysteine 416 and cysteine 428.

This sequence belongs to the LDH/MDH superfamily. MDH type 2 family. Homodimer.

It localises to the plastid. It is found in the chloroplast. The enzyme catalyses (S)-malate + NADP(+) = oxaloacetate + NADPH + H(+). With respect to regulation, chloroplast NADP-MDH is activated upon illumination. In order to be enzymatically active, disulfide bridges on the protein must be reduced by thioredoxin which receives electrons from ferredoxin and the electron transport system of photosynthesis. The chloroplastic, NADP-dependent form is essential for the photosynthesis C4 cycle, which allows plants to circumvent the problem of photorespiration. In C4 plants, NADP-MDH activity acts to convert oxaloacetate to malate in chloroplasts of mesophyll cells for transport to the bundle sheath cells. In Mesembryanthemum crystallinum (Common ice plant), this protein is Malate dehydrogenase [NADP], chloroplastic (MDH1).